The chain runs to 401 residues: Heat stress transcription factor A-4a (401 aa).

Residues L13 to P107 mediate DNA binding. The interval P122–L188 is hydrophobic repeat HR-A/B. The Nuclear localization signal signature appears at R207–R213. An AHA1 motif is present at residues I256–D265. Residues D341–E350 carry the AHA2 motif. A disordered region spans residues N351 to V373. The segment covering E356–V373 has biased composition (basic and acidic residues). The Nuclear export signal signature appears at I388–L395.

Belongs to the HSF family. Class A subfamily. As to quaternary structure, homotrimer. Exhibits temperature-dependent phosphorylation.

The protein localises to the cytoplasm. Its subcellular location is the nucleus. In terms of biological role, transcriptional activator that specifically binds DNA sequence 5'-AGAAnnTTCT-3' known as heat shock promoter elements (HSE). The sequence is that of Heat stress transcription factor A-4a (HSFA4A) from Arabidopsis thaliana (Mouse-ear cress).